We begin with the raw amino-acid sequence, 359 residues long: 4-hydroxy-3-methylbut-2-en-1-yl diphosphate synthase (flavodoxin) (359 aa).

[4Fe-4S] cluster is bound by residues Cys-264, Cys-267, Cys-299, and Glu-306.

This sequence belongs to the IspG family. The cofactor is [4Fe-4S] cluster.

It carries out the reaction (2E)-4-hydroxy-3-methylbut-2-enyl diphosphate + oxidized [flavodoxin] + H2O + 2 H(+) = 2-C-methyl-D-erythritol 2,4-cyclic diphosphate + reduced [flavodoxin]. It participates in isoprenoid biosynthesis; isopentenyl diphosphate biosynthesis via DXP pathway; isopentenyl diphosphate from 1-deoxy-D-xylulose 5-phosphate: step 5/6. Its function is as follows. Converts 2C-methyl-D-erythritol 2,4-cyclodiphosphate (ME-2,4cPP) into 1-hydroxy-2-methyl-2-(E)-butenyl 4-diphosphate. The sequence is that of 4-hydroxy-3-methylbut-2-en-1-yl diphosphate synthase (flavodoxin) from Helicobacter pylori (strain Shi470).